The following is a 147-amino-acid chain: Myoglobin (147 aa).

Positions 2-141 (ADFDAVLKCW…IIADLEANYK (140 aa)) constitute a Globin domain. H60 serves as a coordination point for nitrite. H60 serves as a coordination point for O2. H89 lines the heme b pocket.

The protein belongs to the globin family. Monomeric.

It is found in the cytoplasm. It localises to the sarcoplasm. It catalyses the reaction Fe(III)-heme b-[protein] + nitric oxide + H2O = Fe(II)-heme b-[protein] + nitrite + 2 H(+). It carries out the reaction H2O2 + AH2 = A + 2 H2O. Monomeric heme protein which primary function is to store oxygen and facilitate its diffusion within muscle tissues. Reversibly binds oxygen through a pentacoordinated heme iron and enables its timely and efficient release as needed during periods of heightened demand. Depending on the oxidative conditions of tissues and cells, and in addition to its ability to bind oxygen, it also has a nitrite reductase activity whereby it regulates the production of bioactive nitric oxide. Under stress conditions, like hypoxia and anoxia, it also protects cells against reactive oxygen species thanks to its pseudoperoxidase activity. In Thunnus obesus (Bigeye tuna), this protein is Myoglobin (mb).